A 154-amino-acid chain; its full sequence is Host transcription reprogramming factor 5 (154 aa).

An N-terminal signal peptide occupies residues 1-19 (MQILRIAQLMALLATCASA). The tract at residues 24–85 (TGSRVYSRDV…KRIKAEQNAR (62 aa)) is disordered. Over residues 35–50 (QTQGGFSGSPTTNSPD) the composition is skewed to polar residues. The span at 69 to 85 (ETEKERKKRIKAEQNAR) shows a compositional bias: basic and acidic residues. Residues 96-121 (YQCPYCSDPTVFSHSDALGRHIYTIH) form a C2H2-type; degenerate zinc finger.

It is found in the secreted. It localises to the host nucleus. Functionally, probable secreted effector that translocates into the nuclei of host cells to reprogram the expression of targeted genes by binding on effector binding elements in rice. The protein is Host transcription reprogramming factor 5 of Pyricularia oryzae (strain 70-15 / ATCC MYA-4617 / FGSC 8958) (Rice blast fungus).